The following is a 436-amino-acid chain: Histidine--tRNA ligase (436 aa).

Belongs to the class-II aminoacyl-tRNA synthetase family. Homodimer.

The protein resides in the cytoplasm. It catalyses the reaction tRNA(His) + L-histidine + ATP = L-histidyl-tRNA(His) + AMP + diphosphate + H(+). This chain is Histidine--tRNA ligase, found in Psychrobacter sp. (strain PRwf-1).